The sequence spans 45 residues: Small polypeptide DEVIL 23 (45 aa).

The tract at residues 13-44 is required for DVL/RTFL small polypeptide activity; it reads KSTLRCWDWCKEQRTRAYIIWRCLIFLLRWDD. Residues 22–39 traverse the membrane as a helical segment; it reads CKEQRTRAYIIWRCLIFL.

This sequence belongs to the DVL/RTFL small polypeptides family.

It localises to the cell membrane. In terms of biological role, small polypeptide acting as a regulatory molecule which coordinates cellular responses required for differentiation, growth and development, probably by restricting polar cell proliferation in lateral organs and coordinating socket cell recruitment and differentiation at trichome sites. The protein is Small polypeptide DEVIL 23 of Arabidopsis thaliana (Mouse-ear cress).